Reading from the N-terminus, the 207-residue chain is MKLRGLYAITDSQLLAGRFLSHVEAALDGGVCLLQYRDKSDDAARRLREAEGLMKLCERYGTQLLINDDAELAARLGVGVHLGQTDGPLTPARTLLGRQAIIGSTCHASLELAAQAASEGASYVAFGRFFNSVTKPGAPAANVDLLEQARAQVKLPIAVIGGITLDNAAPLVAHGADLLAVIHGLFGADSAQEVTRRARAFNALFAS.

4-amino-2-methyl-5-(diphosphooxymethyl)pyrimidine is bound by residues 35–39 (QYRDK) and Asn-67. The Mg(2+) site is built by Asp-68 and Asp-86. Thr-105 provides a ligand contact to 4-amino-2-methyl-5-(diphosphooxymethyl)pyrimidine. 2-[(2R,5Z)-2-carboxy-4-methylthiazol-5(2H)-ylidene]ethyl phosphate is bound at residue 132–134 (SVT). 4-amino-2-methyl-5-(diphosphooxymethyl)pyrimidine is bound at residue Lys-135. Position 162 (Gly-162) interacts with 2-[(2R,5Z)-2-carboxy-4-methylthiazol-5(2H)-ylidene]ethyl phosphate.

This sequence belongs to the thiamine-phosphate synthase family. It depends on Mg(2+) as a cofactor.

It carries out the reaction 2-[(2R,5Z)-2-carboxy-4-methylthiazol-5(2H)-ylidene]ethyl phosphate + 4-amino-2-methyl-5-(diphosphooxymethyl)pyrimidine + 2 H(+) = thiamine phosphate + CO2 + diphosphate. It catalyses the reaction 2-(2-carboxy-4-methylthiazol-5-yl)ethyl phosphate + 4-amino-2-methyl-5-(diphosphooxymethyl)pyrimidine + 2 H(+) = thiamine phosphate + CO2 + diphosphate. The enzyme catalyses 4-methyl-5-(2-phosphooxyethyl)-thiazole + 4-amino-2-methyl-5-(diphosphooxymethyl)pyrimidine + H(+) = thiamine phosphate + diphosphate. It participates in cofactor biosynthesis; thiamine diphosphate biosynthesis; thiamine phosphate from 4-amino-2-methyl-5-diphosphomethylpyrimidine and 4-methyl-5-(2-phosphoethyl)-thiazole: step 1/1. Functionally, condenses 4-methyl-5-(beta-hydroxyethyl)thiazole monophosphate (THZ-P) and 2-methyl-4-amino-5-hydroxymethyl pyrimidine pyrophosphate (HMP-PP) to form thiamine monophosphate (TMP). The chain is Thiamine-phosphate synthase from Pseudomonas putida (strain GB-1).